The chain runs to 93 residues: UPF0337 protein Bd3330 (93 aa).

The protein belongs to the UPF0337 (CsbD) family.

In Bdellovibrio bacteriovorus (strain ATCC 15356 / DSM 50701 / NCIMB 9529 / HD100), this protein is UPF0337 protein Bd3330.